The primary structure comprises 2346 residues: Acetyl-CoA carboxylase 1 (2346 aa).

An N-acetylmethionine modification is found at methionine 1. 8 positions are modified to phosphoserine: serine 5, serine 23, serine 25, serine 29, serine 34, serine 48, serine 50, and serine 53. A Phosphothreonine modification is found at threonine 58. Phosphoserine is present on residues serine 78 and serine 80. The region spanning 117-618 (VIEKVLIANN…DTGWLDRLIA (502 aa)) is the Biotin carboxylation domain. An ATP-grasp domain is found at 275–466 (SKRILNVPQE…LPAAQLQIAM (192 aa)). ATP is bound at residue 315–320 (GGGGKG). Mg(2+) contacts are provided by glutamate 424, glutamate 437, and asparagine 439. The Mn(2+) site is built by glutamate 424, glutamate 437, and asparagine 439. The active site involves arginine 441. Serine 488 is modified (phosphoserine). Threonine 610 is subject to Phosphothreonine. The region spanning 745-819 (FEKENDPSVM…DPGCVLAKMQ (75 aa)) is the Biotinyl-binding domain. Lysine 786 bears the N6-biotinyllysine mark. Phosphoserine occurs at positions 835, 1201, 1216, and 1218. Threonine 1227 is subject to Phosphothreonine. A phosphoserine mark is found at serine 1259, serine 1263, and serine 1273. Lysine 1334 bears the N6-acetyllysine mark. Positions 1576-1914 (PYVTKDLLQS…SVHSSVPLLN (339 aa)) constitute a CoA carboxyltransferase N-terminal domain. A carboxyltransferase region spans residues 1576 to 2234 (PYVTKDLLQS…EDLVKKKIHN (659 aa)). Residues arginine 1823, lysine 2127, and arginine 2129 each coordinate CoA. Positions 1918-2234 (PIDRIIEFVP…EDLVKKKIHN (317 aa)) constitute a CoA carboxyltransferase C-terminal domain. Phosphothreonine is present on threonine 2153.

As to quaternary structure, monomer, homodimer, and homotetramer. Can form filamentous polymers. Interacts in its inactive phosphorylated form with the BRCT domains of BRCA1 which prevents ACACA dephosphorylation and inhibits lipid synthesis. Interacts with MID1IP1; interaction with MID1IP1 promotes oligomerization and increases its activity. Mg(2+) serves as cofactor. Mn(2+) is required as a cofactor. Requires biotin as cofactor. Phosphorylation on Ser-1263 is required for interaction with BRCA1. Post-translationally, phosphorylation at Ser-80 by AMPK inactivates enzyme activity. In terms of processing, the biotin cofactor is covalently attached to the central biotinyl-binding domain and is required for the catalytic activity. Expressed in brain, placenta, skeletal muscle, renal, pancreatic and adipose tissues; expressed at low level in pulmonary tissue; not detected in the liver.

It localises to the cytoplasm. It is found in the cytosol. It catalyses the reaction hydrogencarbonate + acetyl-CoA + ATP = malonyl-CoA + ADP + phosphate + H(+). It participates in lipid metabolism; malonyl-CoA biosynthesis; malonyl-CoA from acetyl-CoA: step 1/1. Inhibited by phosphorylation. Citrate promotes oligomerization of the protein into filaments that correspond to the most active form of the carboxylase. Inhibited by palmitoyl-CoA. Cytosolic enzyme that catalyzes the carboxylation of acetyl-CoA to malonyl-CoA, the first and rate-limiting step of de novo fatty acid biosynthesis. This is a 2 steps reaction starting with the ATP-dependent carboxylation of the biotin carried by the biotin carboxyl carrier (BCC) domain followed by the transfer of the carboxyl group from carboxylated biotin to acetyl-CoA. This Homo sapiens (Human) protein is Acetyl-CoA carboxylase 1.